The chain runs to 1288 residues: 5-oxoprolinase (1288 aa).

Thr-151 is modified (phosphothreonine). Residues 1249–1269 (GGGGYGDPEDPAPLPGSPLQP) are disordered. The residue at position 1265 (Ser-1265) is a Phosphoserine.

The protein belongs to the oxoprolinase family. In terms of assembly, homodimer. As to expression, expressed in coronary artery and kidney.

It localises to the cytoplasm. The protein localises to the cytosol. The enzyme catalyses 5-oxo-L-proline + ATP + 2 H2O = L-glutamate + ADP + phosphate + H(+). Functionally, catalyzes the cleavage of 5-oxo-L-proline to form L-glutamate coupled to the hydrolysis of ATP to ADP and inorganic phosphate. The polypeptide is 5-oxoprolinase (OPLAH) (Bos taurus (Bovine)).